Reading from the N-terminus, the 160-residue chain is Large ribosomal subunit protein uL13 (160 aa).

It belongs to the universal ribosomal protein uL13 family. In terms of assembly, part of the 50S ribosomal subunit.

Its function is as follows. This protein is one of the early assembly proteins of the 50S ribosomal subunit, although it is not seen to bind rRNA by itself. It is important during the early stages of 50S assembly. The sequence is that of Large ribosomal subunit protein uL13 from Orientia tsutsugamushi (strain Ikeda) (Rickettsia tsutsugamushi).